The primary structure comprises 193 residues: ER membrane protein complex subunit 4 (193 aa).

The next 2 membrane-spanning stretches (helical) occupy residues 91–111 (ILAY…TLML) and 137–157 (LWPA…IGVY).

Belongs to the EMC4 family.

It is found in the endoplasmic reticulum membrane. The protein is ER membrane protein complex subunit 4 of Schizosaccharomyces pombe (strain 972 / ATCC 24843) (Fission yeast).